The primary structure comprises 274 residues: Ethanolamine ammonia-lyase small subunit (274 aa).

Adenosylcob(III)alamin is bound by residues Val-161, Glu-182, and Cys-211.

Belongs to the EutC family. In terms of assembly, the basic unit is a heterodimer which dimerizes to form tetramers. The heterotetramers trimerize; 6 large subunits form a core ring with 6 small subunits projecting outwards. Requires adenosylcob(III)alamin as cofactor.

Its subcellular location is the bacterial microcompartment. The catalysed reaction is ethanolamine = acetaldehyde + NH4(+). Its pathway is amine and polyamine degradation; ethanolamine degradation. Its function is as follows. Catalyzes the deamination of various vicinal amino-alcohols to oxo compounds. Allows this organism to utilize ethanolamine as the sole source of nitrogen and carbon in the presence of external vitamin B12. The sequence is that of Ethanolamine ammonia-lyase small subunit from Pseudomonas fluorescens (strain ATCC BAA-477 / NRRL B-23932 / Pf-5).